We begin with the raw amino-acid sequence, 477 residues long: tRNA-2-methylthio-N(6)-dimethylallyladenosine synthase (477 aa).

Residues 3–120 (KKLFIKTWGC…LPEMINQIKG (118 aa)) enclose the MTTase N-terminal domain. The [4Fe-4S] cluster site is built by Cys12, Cys49, Cys83, Cys157, Cys161, and Cys164. One can recognise a Radical SAM core domain in the interval 143-375 (KAEGPTAFVS…QNRITQQALR (233 aa)). The region spanning 378-441 (RNMIDSEQRV…ANSLRGDVLR (64 aa)) is the TRAM domain.

This sequence belongs to the methylthiotransferase family. MiaB subfamily. As to quaternary structure, monomer. [4Fe-4S] cluster is required as a cofactor.

The protein localises to the cytoplasm. It catalyses the reaction N(6)-dimethylallyladenosine(37) in tRNA + (sulfur carrier)-SH + AH2 + 2 S-adenosyl-L-methionine = 2-methylsulfanyl-N(6)-dimethylallyladenosine(37) in tRNA + (sulfur carrier)-H + 5'-deoxyadenosine + L-methionine + A + S-adenosyl-L-homocysteine + 2 H(+). In terms of biological role, catalyzes the methylthiolation of N6-(dimethylallyl)adenosine (i(6)A), leading to the formation of 2-methylthio-N6-(dimethylallyl)adenosine (ms(2)i(6)A) at position 37 in tRNAs that read codons beginning with uridine. The protein is tRNA-2-methylthio-N(6)-dimethylallyladenosine synthase of Pseudoalteromonas atlantica (strain T6c / ATCC BAA-1087).